The chain runs to 246 residues: Protein DEHYDRATION-INDUCED 19 homolog 3 (246 aa).

The tract at residues 185–230 is disordered; that stretch reads ERSKAPVPIPDDTSIHKDTPAQPWESRIDSSLTSEEREQKRKQATD. Residues 218–229 are compositionally biased toward basic and acidic residues; sequence SEEREQKRKQAT.

The protein belongs to the Di19 family.

This chain is Protein DEHYDRATION-INDUCED 19 homolog 3 (DI19-3), found in Oryza sativa subsp. japonica (Rice).